The primary structure comprises 101 residues: MASGSMSSYGSGSWTVKQNKAFERALAVYDQDTPDRWHNVARAVGGKTPEEAKRQYDLLVRDIESIENGHVPFPDYKTTTGNSNRGRLRDEEKRMRSMKLQ.

Positions 9-64 (YGSGSWTVKQNKAFERALAVYDQDTPDRWHNVARAVGGKTPEEAKRQYDLLVRDIE) constitute an SANT domain. The segment at 69–101 (GHVPFPDYKTTTGNSNRGRLRDEEKRMRSMKLQ) is disordered.

Expressed in the funiculus of ovules and in embryos. In young ovules, expression is observed in the adaxial side of the funiculus (the stalk connecting the embryo sac to the placenta). Also expressed in heart-stage embryos, in the cortex and endodermis of the hypocotyl region but not in the cotyledons, shoot and root apical meristems, provasculature or epidermis. Not detected in young seedlings, mature roots or in young floral primordia.

The protein localises to the nucleus. Its function is as follows. Probable transcription factor. Required for female gametophyte development. The protein is Protein RADIALIS-like 2 (RL2) of Arabidopsis thaliana (Mouse-ear cress).